The sequence spans 204 residues: Large ribosomal subunit protein uL4 (204 aa).

The interval 44–76 (KRQGTQSAKTRSEVRGGGIKPWRQKGTGRARQG) is disordered.

Belongs to the universal ribosomal protein uL4 family. Part of the 50S ribosomal subunit.

Its function is as follows. One of the primary rRNA binding proteins, this protein initially binds near the 5'-end of the 23S rRNA. It is important during the early stages of 50S assembly. It makes multiple contacts with different domains of the 23S rRNA in the assembled 50S subunit and ribosome. Forms part of the polypeptide exit tunnel. In Clostridium perfringens (strain 13 / Type A), this protein is Large ribosomal subunit protein uL4.